The chain runs to 392 residues: Glutamate 5-kinase (392 aa).

K17 provides a ligand contact to ATP. 3 residues coordinate substrate: S57, D144, and N156. Position 176–177 (176–177 (SD)) interacts with ATP. Residues 282–359 (AGILSVDAGA…AEIEALLGYA (78 aa)) enclose the PUA domain. The interval 373–392 (TEQTGRKAGKSTKKKDEAHA) is disordered.

This sequence belongs to the glutamate 5-kinase family.

The protein resides in the cytoplasm. The catalysed reaction is L-glutamate + ATP = L-glutamyl 5-phosphate + ADP. It functions in the pathway amino-acid biosynthesis; L-proline biosynthesis; L-glutamate 5-semialdehyde from L-glutamate: step 1/2. Catalyzes the transfer of a phosphate group to glutamate to form L-glutamate 5-phosphate. In Allorhizobium ampelinum (strain ATCC BAA-846 / DSM 112012 / S4) (Agrobacterium vitis (strain S4)), this protein is Glutamate 5-kinase.